Here is a 101-residue protein sequence, read N- to C-terminus: NADH-quinone oxidoreductase subunit K (101 aa).

The next 3 helical transmembrane spans lie at 4 to 24, 30 to 50, and 65 to 85; these read LEHYLTVSAALLVIGIFGIFL, IVILMSIELMLLAVNINLVAF, and FVLTVAAAEAAIGLAILVTFF.

It belongs to the complex I subunit 4L family. In terms of assembly, NDH-1 is composed of 14 different subunits. Subunits NuoA, H, J, K, L, M, N constitute the membrane sector of the complex.

Its subcellular location is the cell inner membrane. The enzyme catalyses a quinone + NADH + 5 H(+)(in) = a quinol + NAD(+) + 4 H(+)(out). Its function is as follows. NDH-1 shuttles electrons from NADH, via FMN and iron-sulfur (Fe-S) centers, to quinones in the respiratory chain. The immediate electron acceptor for the enzyme in this species is believed to be ubiquinone. Couples the redox reaction to proton translocation (for every two electrons transferred, four hydrogen ions are translocated across the cytoplasmic membrane), and thus conserves the redox energy in a proton gradient. The chain is NADH-quinone oxidoreductase subunit K from Cereibacter sphaeroides (strain ATCC 17029 / ATH 2.4.9) (Rhodobacter sphaeroides).